The chain runs to 67 residues: Surface composition regulator (67 aa).

This sequence belongs to the GlgS family.

In terms of biological role, major determinant of cell surface composition. Negatively regulates motility, adhesion and synthesis of biofilm exopolysaccharides. The chain is Surface composition regulator from Salmonella paratyphi A (strain ATCC 9150 / SARB42).